The following is a 687-amino-acid chain: Polyphosphate kinase (687 aa).

ATP is bound at residue asparagine 45. Arginine 375 and arginine 405 together coordinate Mg(2+). Catalysis depends on histidine 435, which acts as the Phosphohistidine intermediate. Residues tyrosine 472, arginine 568, and histidine 596 each coordinate ATP.

Belongs to the polyphosphate kinase 1 (PPK1) family. Requires Mg(2+) as cofactor. An intermediate of this reaction is the autophosphorylated ppk in which a phosphate is covalently linked to a histidine residue through a N-P bond.

It carries out the reaction [phosphate](n) + ATP = [phosphate](n+1) + ADP. Its function is as follows. Catalyzes the reversible transfer of the terminal phosphate of ATP to form a long-chain polyphosphate (polyP). The polypeptide is Polyphosphate kinase (Burkholderia multivorans (strain ATCC 17616 / 249)).